A 23-amino-acid polypeptide reads, in one-letter code: PAWLVDCPCVGDDINRLLTRGEK.

Pro1 is a propeptide. The segment at residues 2–8 (AWLVDCP) is a cross-link (cyclopeptide (Ala-Pro)). A cross-link (2'-cysteinyl-6'-hydroxytryptophan sulfoxide (Trp-Cys)) is located at residues 3–7 (WLVDC). Positions 9–23 (CVGDDINRLLTRGEK) are excised as a propeptide.

Belongs to the MSDIN fungal toxin family. Processed by the macrocyclase-peptidase enzyme POPB to yield a toxic cyclic heptapeptide. POPB first removes 10 residues from the N-terminus. Conformational trapping of the remaining peptide forces the enzyme to release this intermediate rather than proceed to macrocyclization. The enzyme rebinds the remaining peptide in a different conformation and catalyzes macrocyclization of the N-terminal 7 residues.

In terms of biological role, major toxin that belongs to the bicyclic heptapeptides called phallotoxins. Although structurally related to amatoxins, phallotoxins have a different mode of action, which is the stabilization of F-actin. Phallotoxins are poisonous when administered parenterally, but not orally because of poor absorption. This chain is Phallacidin proprotein 1, found in Amanita phalloides (Death cap).